A 688-amino-acid polypeptide reads, in one-letter code: MDFITINSGNRTEEFALKQVAKQATSSLMYRLGKTLILASVCVEREPVSEDFLPLVVQFLEKSYAAGKIPGGFVKREGRAQDFEILTSRLIDRTLRPLFPKDYRYPTQITLMVLNHDIENDLQVSALNAASATLFLAHIAPIKSVSACRIARVDNEFIINPSASLLNQSSLDLFVSGTKESLNMIEMRSLGQKLNALEEPLMLEALELAQKSLKETCALYEEAFTPYQNELLFKEGEGIVLNERLLDLLKNQYFDEIIKGIESSALSERENVFKEVAKKISEAHSEFSLEEIELSLEKVKKTEIRRMIIQDKIRPDKRALEEVRPISIESNLLPMAHSSILFTRGQTQSLVVGVLGMDNDAQTHENLEHKAPIKERFMFHYNFPPFCVGEASSIGATSRRELGHGNLAKRALETSIKNKEQVIRLVSEILESNGSSSMASVCAGSLALYASGVEIHDLVAGVAMGMVSERQDHAILSDISGLEDAEGDMDFKIAGNLEGITAMQMDTKMSGIQLEVLYQALLQAKRARKHILKIMHEAKEKIVINFSHLPQTEIFNVAPDKIIEIIGQGGRVIKEIVEKFEVKIDLNTPSGEVKIMGNKERVLKTKEFILNYLHSLDQELEQYAIDEVLEAQVKRIVDFGAFLSLPKGGEGLLRKQNMDKCQVILKEGDSIRCRVISFNKGKIALDLA.

Residues D484 and D490 each coordinate Mg(2+). Residues 550–609 (PQTEIFNVAPDKIIEIIGQGGRVIKEIVEKFEVKIDLNTPSGEVKIMGNKERVLKTKEFI) form the KH domain. Residues 626–688 (DEVLEAQVKR…NKGKIALDLA (63 aa)) enclose the S1 motif domain.

The protein belongs to the polyribonucleotide nucleotidyltransferase family. Requires Mg(2+) as cofactor.

Its subcellular location is the cytoplasm. It catalyses the reaction RNA(n+1) + phosphate = RNA(n) + a ribonucleoside 5'-diphosphate. In terms of biological role, involved in mRNA degradation. Catalyzes the phosphorolysis of single-stranded polyribonucleotides processively in the 3'- to 5'-direction. This Helicobacter pylori (strain J99 / ATCC 700824) (Campylobacter pylori J99) protein is Polyribonucleotide nucleotidyltransferase.